Reading from the N-terminus, the 81-residue chain is MNPLIPAASVIAAGLAVGLASIGPGIGQGTAAGQAVEGIARQPEAEGKIRGTLLSSPASMEALTIYGLVVALALSFANPFI.

2 consecutive transmembrane segments (helical) span residues 3-23 (PLIPAASVIAAGLAVGLASIG) and 61-81 (EALTIYGLVVALALSFANPFI).

The protein belongs to the ATPase C chain family. F-type ATPases have 2 components, F(1) - the catalytic core - and F(0) - the membrane proton channel. F(1) has five subunits: alpha(3), beta(3), gamma(1), delta(1), epsilon(1). F(0) has four main subunits: a(1), b(1), b'(1) and c(10-14). The alpha and beta chains form an alternating ring which encloses part of the gamma chain. F(1) is attached to F(0) by a central stalk formed by the gamma and epsilon chains, while a peripheral stalk is formed by the delta, b and b' chains.

The protein localises to the plastid membrane. F(1)F(0) ATP synthase produces ATP from ADP in the presence of a proton or sodium gradient. F-type ATPases consist of two structural domains, F(1) containing the extramembraneous catalytic core and F(0) containing the membrane proton channel, linked together by a central stalk and a peripheral stalk. During catalysis, ATP synthesis in the catalytic domain of F(1) is coupled via a rotary mechanism of the central stalk subunits to proton translocation. In terms of biological role, key component of the F(0) channel; it plays a direct role in translocation across the membrane. A homomeric c-ring of between 10-14 subunits forms the central stalk rotor element with the F(1) delta and epsilon subunits. This chain is ATP synthase subunit C, plastid, found in Aneura mirabilis (Parasitic liverwort).